A 164-amino-acid polypeptide reads, in one-letter code: Respiratory growth induced protein 2 (164 aa).

The protein belongs to the RGI1 family.

It is found in the cytoplasm. Functionally, involved in the control of energetic metabolism and significantly contribute to cell fitness, especially under respiratory growth conditions. This is Respiratory growth induced protein 2 (RGI2) from Candida glabrata (strain ATCC 2001 / BCRC 20586 / JCM 3761 / NBRC 0622 / NRRL Y-65 / CBS 138) (Yeast).